The following is a 184-amino-acid chain: Guanylate kinase (184 aa).

One can recognise a Guanylate kinase-like domain in the interval 4–182 (MGLTVLSGPS…AAARLVALMI (179 aa)). An ATP-binding site is contributed by 11-18 (GPSGVGKD).

Belongs to the guanylate kinase family.

The protein resides in the cytoplasm. It catalyses the reaction GMP + ATP = GDP + ADP. In terms of biological role, essential for recycling GMP and indirectly, cGMP. The polypeptide is Guanylate kinase (Frankia casuarinae (strain DSM 45818 / CECT 9043 / HFP020203 / CcI3)).